Reading from the N-terminus, the 296-residue chain is Coatomer subunit epsilon (296 aa).

Belongs to the COPE family. As to quaternary structure, oligomeric complex that consists of at least the alpha, beta, beta', gamma, delta, epsilon and zeta subunits. Interacts with the ESCRT-0 subunit VPS27.

It is found in the cytoplasm. Its subcellular location is the golgi apparatus membrane. It localises to the cytoplasmic vesicle. The protein resides in the COPI-coated vesicle membrane. Functionally, the coatomer is a cytosolic protein complex that binds to dilysine motifs and reversibly associates with Golgi non-clathrin-coated vesicles, which further mediate biosynthetic protein transport from the ER, via the Golgi up to the trans Golgi network. The coatomer complex is required for budding from Golgi membranes, and is essential for the retrograde Golgi-to-ER transport of dilysine-tagged proteins. In Saccharomyces cerevisiae (strain ATCC 204508 / S288c) (Baker's yeast), this protein is Coatomer subunit epsilon (SEC28).